A 371-amino-acid chain; its full sequence is Fe(3+) ions import ATP-binding protein FbpC (371 aa).

The region spanning 5–235 (IKIENAQKRY…PANLFVATFI (231 aa)) is the ABC transporter domain. Residue 37–44 (GPSGCGKT) participates in ATP binding.

It belongs to the ABC transporter superfamily. Fe(3+) ion importer (TC 3.A.1.10) family. As to quaternary structure, the complex is composed of two ATP-binding proteins (FbpC), two transmembrane proteins (FbpB) and a solute-binding protein (FbpA).

It is found in the cell inner membrane. The catalysed reaction is Fe(3+)(out) + ATP + H2O = Fe(3+)(in) + ADP + phosphate + H(+). Functionally, part of the ABC transporter complex FbpABC involved in Fe(3+) ions import. Responsible for energy coupling to the transport system. In Fusobacterium nucleatum subsp. nucleatum (strain ATCC 25586 / DSM 15643 / BCRC 10681 / CIP 101130 / JCM 8532 / KCTC 2640 / LMG 13131 / VPI 4355), this protein is Fe(3+) ions import ATP-binding protein FbpC.